We begin with the raw amino-acid sequence, 161 residues long: Ribonuclease H (161 aa).

Residues 5-149 form the RNase H type-1 domain; it reads EKLAIAAATD…VDAIAVAFSK (145 aa). Mg(2+) contacts are provided by Asp14, Glu53, Asp78, and Asp141.

This sequence belongs to the RNase H family. In terms of assembly, monomer. Requires Mg(2+) as cofactor.

The protein localises to the cytoplasm. The enzyme catalyses Endonucleolytic cleavage to 5'-phosphomonoester.. Endonuclease that specifically degrades the RNA of RNA-DNA hybrids. The protein is Ribonuclease H of Prochlorococcus marinus (strain NATL1A).